We begin with the raw amino-acid sequence, 115 residues long: Ustilagic acid biosynthesis cluster protein orf3 (115 aa).

Residues 1–38 form the signal peptide; the sequence is MTYSKIACSLGKRGIARAPNQASSFFLLLFLFAKFSQQ. The tract at residues 42–62 is disordered; it reads SPCLASSGVAKSRGPASTDRP.

It participates in secondary metabolite biosynthesis. In terms of biological role, part of the gene cluster that mediates the biosynthesis of the glycolipid biosurfactant ustilagic acid (UA). UA is a secreted cellobiose glycolipid that is toxic for many microorganisms and confers biocontrol activity to U.maydis. UA consists of 15,16-dihydroxypalmitic or 2,15,16-trihydroxypalmitic acid, which is O-glycosidically linked to cellobiose at its terminal hydroxyl group. In addition, the cellobiose moiety is acetylated and acylated with a short-chain hydroxy fatty acid. UA biosynthesis starts with omega-hydroxylation of palmitic acid catalyzed by the cytochrome P450 monooxygenase cyp1. Terminal hydroxylation of palmitic acid precedes subterminal hydroxylation catalyzed by the cytochrome P450 monooxygenase cyp2. Sequential glucosylation of the hydroxy fatty acid is probably catalyzed by the glycosyltransferase ugt1. The cellobiose lipid is further decorated by acetylation of the proximal glucose residue and by acylation with a short-chain beta-hydroxy fatty acid at the distal glucose residue. The acyltransferase uat1 may be a good candidate for catalyzing either acetylation or acylation of the cellobiose lipid. The fatty acid synthase fas2 may be involved in synthesis of the carbon backbone of the short-chain beta-hydroxy fatty acid esterified to the cellobiose disaccharide. The secreted UA consists of a mixture of both alpha-hydroxylated and non-hydroxylated glycolipids; therefore, alpha-hydroxylation of the long-chain fatty, catalyzed by the fatty acid hydroxylase ahd1, occurs late in UA biosynthesis and may be the last step before secretion. In Mycosarcoma maydis (Corn smut fungus), this protein is Ustilagic acid biosynthesis cluster protein orf3.